Consider the following 428-residue polypeptide: Glutamate-1-semialdehyde 2,1-aminomutase (428 aa).

K267 carries the N6-(pyridoxal phosphate)lysine modification.

It belongs to the class-III pyridoxal-phosphate-dependent aminotransferase family. HemL subfamily. As to quaternary structure, homodimer. The cofactor is pyridoxal 5'-phosphate.

The protein localises to the cytoplasm. The enzyme catalyses (S)-4-amino-5-oxopentanoate = 5-aminolevulinate. Its pathway is porphyrin-containing compound metabolism; protoporphyrin-IX biosynthesis; 5-aminolevulinate from L-glutamyl-tRNA(Glu): step 2/2. The chain is Glutamate-1-semialdehyde 2,1-aminomutase from Pelobacter propionicus (strain DSM 2379 / NBRC 103807 / OttBd1).